The following is a 417-amino-acid chain: D-amino acid dehydrogenase (417 aa).

An FAD-binding site is contributed by 3 to 17 (AVVLGSGVVGLMSAW).

This sequence belongs to the DadA oxidoreductase family. It depends on FAD as a cofactor.

It catalyses the reaction a D-alpha-amino acid + A + H2O = a 2-oxocarboxylate + AH2 + NH4(+). Functionally, oxidative deamination of D-amino acids. The sequence is that of D-amino acid dehydrogenase from Vibrio vulnificus (strain YJ016).